The primary structure comprises 245 residues: MLKATGPLSIILLASTCPSSGAAPLSFAEFNNFARECAPSVAPSTLAAIAQVESRFDPLAVHDNTTGETLHWQNQAQATQVVMDRLEARHSLDVGLMQINSRNFSVLGLTPDGALQPCTSLSVAANLLGSRYAGGNTADDEQLSLRRAISAYNTGDFTHGFANGYVRKVETAAQQLVPPLTARPKDDREKPGSEETWDVWGAYKRRSPEGGAGGSSGPPPPPDEDNRKSEDDDQLLFDLNQGGPQ.

The first 28 residues, 1–28 (MLKATGPLSIILLASTCPSSGAAPLSFA), serve as a signal peptide directing secretion. Positions 176 to 245 (LVPPLTARPK…LFDLNQGGPQ (70 aa)) are disordered. Residues 183–193 (RPKDDREKPGS) show a composition bias toward basic and acidic residues.

It belongs to the virb1 family.

Functionally, virB proteins are suggested to act at the bacterial surface and there play an important role in directing T-DNA transfer to plant cells. The sequence is that of Protein virB1 (virB1) from Agrobacterium fabrum (strain C58 / ATCC 33970) (Agrobacterium tumefaciens (strain C58)).